A 92-amino-acid chain; its full sequence is Large ribosomal subunit protein bL25 (92 aa).

Belongs to the bacterial ribosomal protein bL25 family. Part of the 50S ribosomal subunit; part of the 5S rRNA/L5/L18/L25 subcomplex. Contacts the 5S rRNA. Binds to the 5S rRNA independently of L5 and L18.

In terms of biological role, this is one of the proteins that binds to the 5S RNA in the ribosome where it forms part of the central protuberance. The sequence is that of Large ribosomal subunit protein bL25 from Aliivibrio salmonicida (strain LFI1238) (Vibrio salmonicida (strain LFI1238)).